We begin with the raw amino-acid sequence, 333 residues long: MLFFILFLSIISPIESVDQRIHHPSKCDHLSKFPTKGFTMVLKVSLNGCGRFKRVQDAIDASIGSSQSKTLILIDFGIYRERFIVHENKNNLVVQGMGYSRTSIEWNNTTASSNGTFSSFSVAVFGEKFTAYNISFKNTAPAPNPGAVDAQAVALKVVGDKAAFYGCGFYGNQDTLLDQEGRHFFKGCFIEGSIDFIFGNGRSLYEDCTLHSIAKENTIGCITANGKDTLKDRTGFVFVNCKITGSARVWLGRAWRPYARVIFSKTYMSRVVSLDGWNDMGDPKTQRTVYYGEHRCYGPGANHSKRVTYAKLLSDVEAAPFTNISFIDGEEWL.

The signal sequence occupies residues 1–16 (MLFFILFLSIISPIES). N-linked (GlcNAc...) asparagine glycosylation is found at N108 and N114. Residue T116 coordinates substrate. Residue N133 is glycosylated (N-linked (GlcNAc...) asparagine). Residue Q151 participates in substrate binding. The active-site Proton donor is D174. The Nucleophile role is filled by D195. A substrate-binding site is contributed by R253. N302 and N323 each carry an N-linked (GlcNAc...) asparagine glycan.

This sequence belongs to the pectinesterase family. As to expression, expressed in flower buds.

It is found in the secreted. The protein localises to the cell wall. The catalysed reaction is [(1-&gt;4)-alpha-D-galacturonosyl methyl ester](n) + n H2O = [(1-&gt;4)-alpha-D-galacturonosyl](n) + n methanol + n H(+). It participates in glycan metabolism; pectin degradation; 2-dehydro-3-deoxy-D-gluconate from pectin: step 1/5. Functionally, acts in the modification of cell walls via demethylesterification of cell wall pectin. The sequence is that of Putative pectinesterase 14 (PME14) from Arabidopsis thaliana (Mouse-ear cress).